Consider the following 563-residue polypeptide: GTPase Obg (563 aa).

Residues 2–168 (SDFVDRVTVH…RDVILELKSI (167 aa)) enclose the Obg domain. The OBG-type G domain maps to 169-349 (ADVALVGFPS…LNFALSALVH (181 aa)). GTP contacts are provided by residues 175–182 (GFPSAGKS), 200–204 (FTTLV), 221–224 (DVPG), 301–304 (NKID), and 330–332 (STA). The Mg(2+) site is built by Ser182 and Thr202. Residues 383-469 (DEGGSALEFT…ARMVEFDWDP (87 aa)) form the OCT domain. 2 disordered regions span residues 478–509 (LDGSNLGARGKDLRLEEQDPRTHRRSNAERRA) and 528–563 (ERKAGHWADPTVDDDRHDENSLFGHGESSEDGETEE). The span at 486-509 (RGKDLRLEEQDPRTHRRSNAERRA) shows a compositional bias: basic and acidic residues.

The protein belongs to the TRAFAC class OBG-HflX-like GTPase superfamily. OBG GTPase family. As to quaternary structure, monomer. Mg(2+) serves as cofactor.

It localises to the cytoplasm. In terms of biological role, an essential GTPase which binds GTP, GDP and possibly (p)ppGpp with moderate affinity, with high nucleotide exchange rates and a fairly low GTP hydrolysis rate. Plays a role in control of the cell cycle, stress response, ribosome biogenesis and in those bacteria that undergo differentiation, in morphogenesis control. This is GTPase Obg from Bifidobacterium longum subsp. infantis (strain ATCC 15697 / DSM 20088 / JCM 1222 / NCTC 11817 / S12).